Reading from the N-terminus, the 423-residue chain is MLETLSRQWIVSHRMEMWLLILVAYMFQRNVNSVHMPTKAVDPEAFMNISEIIQHQGYPCEEYEVATEDGYILSVNRIPRGLVQPKKTGSRPVVLLQHGLVGGASNWISNLPNNSLGFILADAGFDVWMGNSRGNAWSRKHKTLSIDQDEFWAFSYDEMARFDLPAVINFILQKTGQEKIYYVGYSQGTTMGFIAFSTMPELAQKIKMYFALAPIATVKHAKSPGTKFLLLPDMMIKGLFGKKEFLYQTRFLRQLVIYLCGQVILDQICSNIMLLLGGFNTNNMNMSRASVYAAHTLAGTSVQNILHWSQAVNSGELRAFDWGSETKNLEKCNQPTPVRYRVRDMTVPTAMWTGGQDWLSNPEDVKMLLSEVTNLIYHKNIPEWAHVDFIWGLDAPHRMYNEIIHLMQQEETNLSQGRCEAVL.

Residues 1–33 form the signal peptide; that stretch reads MLETLSRQWIVSHRMEMWLLILVAYMFQRNVNS. A glycan (N-linked (GlcNAc...) asparagine) is linked at Asn48. One can recognise an AB hydrolase-1 domain in the interval 92–392; sequence PVVLLQHGLV…EWAHVDFIWG (301 aa). Ser186 acts as the Nucleophile in catalysis. An intrachain disulfide couples Cys260 to Cys269. Catalysis depends on charge relay system residues Asp357 and His386.

This sequence belongs to the AB hydrolase superfamily. Lipase family. As to expression, exclusively expressed in the epidermis within the granular keratinocytes.

The protein localises to the secreted. Functionally, plays a highly specific role in the last step of keratinocyte differentiation. May have an essential function in lipid metabolism of the most differentiated epidermal layers. This chain is Lipase member M (LIPM), found in Homo sapiens (Human).